Consider the following 242-residue polypeptide: Fibrinolytic enzyme, isozyme C (242 aa).

One can recognise a Peptidase S1 domain in the interval 1–242 (VIGGTNASPG…YLGWIGDNSR (242 aa)). Cys-29 and Cys-45 are disulfide-bonded. Active-site charge relay system residues include His-44 and Asp-93. 3 cysteine pairs are disulfide-bonded: Cys-127–Cys-197, Cys-158–Cys-176, and Cys-187–Cys-219. Ser-191 functions as the Charge relay system in the catalytic mechanism.

This sequence belongs to the peptidase S1 family.

This is Fibrinolytic enzyme, isozyme C from Lumbricus rubellus (Humus earthworm).